The chain runs to 66 residues: MDWNRIEGNWKQFKGSAKEKWAKLTDDDLKLIEGRREQLEGRLQERYGKAKDQVRQDVDDWLKTLH.

It belongs to the UPF0337 (CsbD) family.

This Bradyrhizobium diazoefficiens (strain JCM 10833 / BCRC 13528 / IAM 13628 / NBRC 14792 / USDA 110) protein is UPF0337 protein bsl1473.